A 280-amino-acid chain; its full sequence is Fructose-1,6-bisphosphatase/inositol-1-monophosphatase (280 aa).

Mg(2+) is bound by residues glutamate 73, aspartate 94, leucine 96, and aspartate 97. Residues 97–99 (DGT), arginine 195, valine 200, and arginine 219 contribute to the substrate site. Aspartate 226 contacts Mg(2+).

Belongs to the inositol monophosphatase superfamily. FBPase class 4 family. It depends on Mg(2+) as a cofactor.

The catalysed reaction is beta-D-fructose 1,6-bisphosphate + H2O = beta-D-fructose 6-phosphate + phosphate. The enzyme catalyses a myo-inositol phosphate + H2O = myo-inositol + phosphate. Its function is as follows. Phosphatase with broad specificity; it can dephosphorylate fructose 1,6-bisphosphate, and both D and L isomers of inositol-1-phosphate (I-1-P). The polypeptide is Fructose-1,6-bisphosphatase/inositol-1-monophosphatase (suhB) (Methanothermobacter thermautotrophicus (strain ATCC 29096 / DSM 1053 / JCM 10044 / NBRC 100330 / Delta H) (Methanobacterium thermoautotrophicum)).